A 33-amino-acid chain; its full sequence is Photosystem II reaction center protein Psb30 (33 aa).

Residues 5–25 form a helical membrane-spanning segment; sequence VIAQLASLALIIVLGPLVIGL.

This sequence belongs to the Psb30/Ycf12 family. PSII is composed of 1 copy each of membrane proteins PsbA, PsbB, PsbC, PsbD, PsbE, PsbF, PsbH, PsbI, PsbJ, PsbK, PsbL, PsbM, PsbT, PsbX, PsbY, PsbZ, Psb30/Ycf12, peripheral proteins of the oxygen-evolving complex and a large number of cofactors. It forms dimeric complexes.

It localises to the plastid. The protein localises to the chloroplast thylakoid membrane. In terms of biological role, a core subunit of photosystem II (PSII), probably helps stabilize the reaction center. In Chara vulgaris (Common stonewort), this protein is Photosystem II reaction center protein Psb30.